Here is a 149-residue protein sequence, read N- to C-terminus: Arginine repressor (149 aa).

It belongs to the ArgR family.

The protein localises to the cytoplasm. The protein operates within amino-acid biosynthesis; L-arginine biosynthesis [regulation]. Regulates arginine biosynthesis genes. This chain is Arginine repressor, found in Shouchella clausii (strain KSM-K16) (Alkalihalobacillus clausii).